The sequence spans 212 residues: MRKRILVSACAALAVFAAHMPTALAAATDQLQSFVTGVKSAKGEFTQRQVKGQGDSLKVTGTSSGSFVFSRPGKFTWRYAKPYEQLLQADGQTLYIYDKDLNQVTERKLDGALGSSPAAILFGSNDLEKNFTVKNGPTRDGVEWLELTPKSKDTQFERIGIGFKGGNLEAMELRDAFGNTTLLTFSAMQKNPQLPANAFRFTVPKGADVMKQ.

The signal sequence occupies residues 1-25 (MRKRILVSACAALAVFAAHMPTALA).

This sequence belongs to the LolA family. As to quaternary structure, monomer.

It is found in the periplasm. Functionally, participates in the translocation of lipoproteins from the inner membrane to the outer membrane. Only forms a complex with a lipoprotein if the residue after the N-terminal Cys is not an aspartate (The Asp acts as a targeting signal to indicate that the lipoprotein should stay in the inner membrane). The chain is Outer-membrane lipoprotein carrier protein from Cupriavidus pinatubonensis (strain JMP 134 / LMG 1197) (Cupriavidus necator (strain JMP 134)).